A 263-amino-acid chain; its full sequence is Small ribosomal subunit protein eS4, Y isoform 2 (263 aa).

Residues 42 to 104 (LPLIVFLRNR…TGEHFRLVYN (63 aa)) form the S4 RNA-binding domain.

It belongs to the eukaryotic ribosomal protein eS4 family.

The sequence is that of Small ribosomal subunit protein eS4, Y isoform 2 (RPS4Y2) from Homo sapiens (Human).